Consider the following 279-residue polypeptide: Lectin 9 (279 aa).

The signal sequence occupies residues 1–23 (MALSSALIKIFITFLFLQNHVNS). N-linked (GlcNAc...) asparagine glycans are attached at residues Asn116, Asn139, Asn235, and Asn272.

This sequence belongs to the leguminous lectin family.

Its function is as follows. May be involved in arbuscular mycorrhizal (AM) symbiosis with AM fungi. The protein is Lectin 9 of Medicago truncatula (Barrel medic).